Consider the following 112-residue polypeptide: uncharacterized protein (112 aa).

Residues 1–27 (MIASIGDSAEPPLRRTRRAQQQDRPPT) form a disordered region.

This is an uncharacterized protein from Orgyia pseudotsugata multicapsid polyhedrosis virus (OpMNPV).